Consider the following 252-residue polypeptide: Trans-aconitate 2-methyltransferase (252 aa).

It belongs to the methyltransferase superfamily. Tam family.

It localises to the cytoplasm. It carries out the reaction trans-aconitate + S-adenosyl-L-methionine = (E)-3-(methoxycarbonyl)pent-2-enedioate + S-adenosyl-L-homocysteine. Functionally, catalyzes the S-adenosylmethionine monomethyl esterification of trans-aconitate. The protein is Trans-aconitate 2-methyltransferase of Escherichia fergusonii (strain ATCC 35469 / DSM 13698 / CCUG 18766 / IAM 14443 / JCM 21226 / LMG 7866 / NBRC 102419 / NCTC 12128 / CDC 0568-73).